We begin with the raw amino-acid sequence, 139 residues long: Large ribosomal subunit protein uL16 (139 aa).

The protein belongs to the universal ribosomal protein uL16 family. As to quaternary structure, part of the 50S ribosomal subunit.

Its function is as follows. Binds 23S rRNA and is also seen to make contacts with the A and possibly P site tRNAs. The chain is Large ribosomal subunit protein uL16 from Koribacter versatilis (strain Ellin345).